The chain runs to 374 residues: MSAIRYELIKKCKQSGARLGRVYTPHGCFDTPAFMPVGTQATVKGMSPDEMKEIEAQIILSNTYHLHMRPGEDIVKEAGGLHGFMNWDRPILTDSGGFQVFSLSDLRDIKEEGVTFKSHIDGSKHFISPEMAIKIQNDLGADIIMAFDECIPYPADYDYAKKSLERTTRWAKRCKDAHRNPEKQALFGIVQGGMYKDLRQQSAYELLELDFPGYAIGGLSVGEPAEIMYEMLEVTVPLLPEDKPRYLMGVGSPDYLIEGATRGIDMFDCVLPTRIGRNGTVLTSKGRIIVRDAIYARDYTPIDPECDCYACRNFTRAYIRHLLKSGEVLGIRLTTWHNLRFLINLMKKVRQAIMEDRLLDFRDEFFSKFGYKKI.

Residue D94 is the Proton acceptor of the active site. Residues 94–98 (DSGGF), D148, Q191, and G218 contribute to the substrate site. The interval 249–255 (GVGSPDY) is RNA binding. The active-site Nucleophile is the D268. Positions 273–277 (TRIGR) are RNA binding; important for wobble base 34 recognition. The Zn(2+) site is built by C306, C308, C311, and H337.

The protein belongs to the queuine tRNA-ribosyltransferase family. Homodimer. Within each dimer, one monomer is responsible for RNA recognition and catalysis, while the other monomer binds to the replacement base PreQ1. Zn(2+) serves as cofactor.

The catalysed reaction is 7-aminomethyl-7-carbaguanine + guanosine(34) in tRNA = 7-aminomethyl-7-carbaguanosine(34) in tRNA + guanine. It functions in the pathway tRNA modification; tRNA-queuosine biosynthesis. Catalyzes the base-exchange of a guanine (G) residue with the queuine precursor 7-aminomethyl-7-deazaguanine (PreQ1) at position 34 (anticodon wobble position) in tRNAs with GU(N) anticodons (tRNA-Asp, -Asn, -His and -Tyr). Catalysis occurs through a double-displacement mechanism. The nucleophile active site attacks the C1' of nucleotide 34 to detach the guanine base from the RNA, forming a covalent enzyme-RNA intermediate. The proton acceptor active site deprotonates the incoming PreQ1, allowing a nucleophilic attack on the C1' of the ribose to form the product. After dissociation, two additional enzymatic reactions on the tRNA convert PreQ1 to queuine (Q), resulting in the hypermodified nucleoside queuosine (7-(((4,5-cis-dihydroxy-2-cyclopenten-1-yl)amino)methyl)-7-deazaguanosine). In Acetivibrio thermocellus (strain ATCC 27405 / DSM 1237 / JCM 9322 / NBRC 103400 / NCIMB 10682 / NRRL B-4536 / VPI 7372) (Clostridium thermocellum), this protein is Queuine tRNA-ribosyltransferase.